A 458-amino-acid polypeptide reads, in one-letter code: ATP synthase subunit beta (458 aa).

Position 148–155 (148–155 (GGAGVGKT)) interacts with ATP.

Belongs to the ATPase alpha/beta chains family. As to quaternary structure, F-type ATPases have 2 components, CF(1) - the catalytic core - and CF(0) - the membrane proton channel. CF(1) has five subunits: alpha(3), beta(3), gamma(1), delta(1), epsilon(1). CF(0) has three main subunits: a(1), b(2) and c(9-12). The alpha and beta chains form an alternating ring which encloses part of the gamma chain. CF(1) is attached to CF(0) by a central stalk formed by the gamma and epsilon chains, while a peripheral stalk is formed by the delta and b chains.

The protein localises to the cell inner membrane. The catalysed reaction is ATP + H2O + 4 H(+)(in) = ADP + phosphate + 5 H(+)(out). Produces ATP from ADP in the presence of a proton gradient across the membrane. The catalytic sites are hosted primarily by the beta subunits. The protein is ATP synthase subunit beta of Pseudomonas putida (strain W619).